Consider the following 449-residue polypeptide: Glucose-6-phosphate isomerase (449 aa).

Residue glutamate 291 is the Proton donor of the active site. Residues histidine 312 and lysine 426 contribute to the active site.

This sequence belongs to the GPI family.

The protein resides in the cytoplasm. It carries out the reaction alpha-D-glucose 6-phosphate = beta-D-fructose 6-phosphate. The protein operates within carbohydrate biosynthesis; gluconeogenesis. Its pathway is carbohydrate degradation; glycolysis; D-glyceraldehyde 3-phosphate and glycerone phosphate from D-glucose: step 2/4. Functionally, catalyzes the reversible isomerization of glucose-6-phosphate to fructose-6-phosphate. The chain is Glucose-6-phosphate isomerase from Streptococcus pneumoniae (strain ATCC BAA-255 / R6).